The chain runs to 371 residues: Riboflavin biosynthesis protein RibD (371 aa).

One can recognise a CMP/dCMP-type deaminase domain in the interval Met-1–Lys-122. The segment at Met-1–Gly-144 is deaminase. Zn(2+) is bound at residue His-49. Glu-51 acts as the Proton donor in catalysis. Cys-74 and Cys-83 together coordinate Zn(2+). A reductase region spans residues Leu-145–Arg-371. Residue Ala-153 participates in NADP(+) binding. Substrate is bound at residue Ser-167. Trp-169 provides a ligand contact to NADP(+). Arg-183 is a binding site for substrate. NADP(+)-binding residues include Thr-195 and Asp-199. Residues Leu-203 and Arg-206 each contribute to the substrate site. Thr-221 serves as a coordination point for NADP(+). Glu-290 is a substrate binding site. An NADP(+)-binding site is contributed by Gly-292–Ser-298.

The protein in the N-terminal section; belongs to the cytidine and deoxycytidylate deaminase family. In the C-terminal section; belongs to the HTP reductase family. The cofactor is Zn(2+).

It catalyses the reaction 2,5-diamino-6-hydroxy-4-(5-phosphoribosylamino)-pyrimidine + H2O + H(+) = 5-amino-6-(5-phospho-D-ribosylamino)uracil + NH4(+). The enzyme catalyses 5-amino-6-(5-phospho-D-ribitylamino)uracil + NADP(+) = 5-amino-6-(5-phospho-D-ribosylamino)uracil + NADPH + H(+). It functions in the pathway cofactor biosynthesis; riboflavin biosynthesis; 5-amino-6-(D-ribitylamino)uracil from GTP: step 2/4. The protein operates within cofactor biosynthesis; riboflavin biosynthesis; 5-amino-6-(D-ribitylamino)uracil from GTP: step 3/4. Its function is as follows. Converts 2,5-diamino-6-(ribosylamino)-4(3h)-pyrimidinone 5'-phosphate into 5-amino-6-(ribosylamino)-2,4(1h,3h)-pyrimidinedione 5'-phosphate. In Bacillus amyloliquefaciens (Bacillus velezensis), this protein is Riboflavin biosynthesis protein RibD (ribD).